The following is a 592-amino-acid chain: Aspartate--tRNA(Asp/Asn) ligase (592 aa).

Glu-182 is an L-aspartate binding site. Residues 206–209 (QIFK) form an aspartate region. Arg-228 contacts L-aspartate. ATP is bound by residues 228 to 230 (RDE) and Gln-237. His-455 serves as a coordination point for L-aspartate. Position 489 (Glu-489) interacts with ATP. Residue Arg-496 participates in L-aspartate binding. An ATP-binding site is contributed by 541–544 (GLDR).

The protein belongs to the class-II aminoacyl-tRNA synthetase family. Type 1 subfamily. As to quaternary structure, homodimer.

The protein resides in the cytoplasm. It catalyses the reaction tRNA(Asx) + L-aspartate + ATP = L-aspartyl-tRNA(Asx) + AMP + diphosphate. Aspartyl-tRNA synthetase with relaxed tRNA specificity since it is able to aspartylate not only its cognate tRNA(Asp) but also tRNA(Asn). Reaction proceeds in two steps: L-aspartate is first activated by ATP to form Asp-AMP and then transferred to the acceptor end of tRNA(Asp/Asn). This is Aspartate--tRNA(Asp/Asn) ligase from Caldanaerobacter subterraneus subsp. tengcongensis (strain DSM 15242 / JCM 11007 / NBRC 100824 / MB4) (Thermoanaerobacter tengcongensis).